The following is a 160-amino-acid chain: UPF0479 membrane protein YLL066W-A (160 aa).

Helical transmembrane passes span 39–59 (IVFC…KVLQ) and 136–156 (VPMI…ISQH).

It belongs to the UPF0479 family.

It localises to the membrane. In Saccharomyces cerevisiae (strain ATCC 204508 / S288c) (Baker's yeast), this protein is UPF0479 membrane protein YLL066W-A.